The primary structure comprises 410 residues: MTEETHPDDDSYIVRVKAVVMTRDDSSGGWFPQEGGGISRVGVCKVMHPEGNGRSGFLIHGERQKDKLVVLECYVRKDLVYTKANPTFHHWKVDNRKFGLTFQSPADARAFDRGVRKAIEDLIEGSTTSSSTLHNEAELGDDDVFTTATDSSSNSSQKREPTTRTISSPTSCEHRKIYTLDPYPMDHYHPDQRLPRSYPQVTFPEDDEEIVRINPREKIWMTGYEDYRHAPVRGKYLDTTEDADSYVRFAKGEVPKHEYTYPYVDSSDFGFGEDPKGSVIKTQPPRAKSRRRKENGERSRCVYCRDMFNHEENRRGHCQDAPDAVRTCIRRVSCMWCADSMLYHCMSDPEGDYTDPCSCDTSDEKFCLRWMALIALSFLAPCMCCYLPLRACHRCGVMCRCCGGKHKAAA.

The 118-residue stretch at 5 to 122 folds into the WH1 domain; the sequence is THPDDDSYIV…RGVRKAIEDL (118 aa). The tract at residues 127–171 is disordered; the sequence is TTSSSTLHNEAELGDDDVFTTATDSSSNSSQKREPTTRTISSPTS. A compositionally biased stretch (polar residues) spans 146 to 156; that stretch reads TTATDSSSNSS. The region spanning 197–252 is the KBD domain; the sequence is SYPQVTFPEDDEEIVRINPREKIWMTGYEDYRHAPVRGKYLDTTEDADSYVRFAKG. Phosphotyrosine occurs at positions 224 and 227. A disordered region spans residues 274-294; the sequence is DPKGSVIKTQPPRAKSRRRKE. An SPR domain is found at 300–408; that stretch reads RCVYCRDMFN…CRCCGGKHKA (109 aa).

As to quaternary structure, homodimer and heterodimer. Able to interact with SPRED1 to form heterodimers. Interacts with RAS. May interact with ZDHHC13 (via ANK repeats) and ZDHHC17 (via ANK repeats). Interacts with TESK1. Interacts with NF1. Phosphorylated on serine and threonine residues. Phosphorylated on tyrosine. Phosphorylation of Tyr-224 and Tyr-227 are required for ubiquitination. Post-translationally, ubiquitinated; leading to degradation by the proteasome. In terms of tissue distribution, predominantly expressed in lung, liver and testis. In testis, it is specially found in mature spermatids projecting into the lumen of the seminiferous. Strongly expressed in glandular epithelia. Also expressed in embryonic tissues such as heart, lung, liver and brain.

It localises to the cell membrane. The protein localises to the cytoplasmic vesicle. The protein resides in the secretory vesicle membrane. It is found in the cytoplasm. Negatively regulates Ras signaling pathways and downstream activation of MAP kinases. Recruits and translocates NF1 to the cell membrane, thereby enabling NF1-dependent hydrolysis of active GTP-bound Ras to inactive GDP-bound Ras. Inhibits fibroblast growth factor (FGF)-induced retinal lens fiber differentiation, probably by inhibiting FGF-mediated phosphorylation of ERK1/2. Inhibits TGFB-induced epithelial-to-mesenchymal transition in lens epithelial cells. This Mus musculus (Mouse) protein is Sprouty-related, EVH1 domain-containing protein 2 (Spred2).